Consider the following 1397-residue polypeptide: DNA-directed RNA polymerase subunit beta' (1397 aa).

Zn(2+) is bound by residues Cys-71, Cys-73, Cys-86, and Cys-89. Mg(2+) is bound by residues Asp-462, Asp-464, and Asp-466. The Zn(2+) site is built by Cys-811, Cys-885, Cys-892, and Cys-895. Positions 1368 to 1397 are disordered; the sequence is QNRDDKILEDQGGATPTASTEIKEPAEGAA. A compositionally biased stretch (basic and acidic residues) spans 1388–1397; that stretch reads EIKEPAEGAA.

This sequence belongs to the RNA polymerase beta' chain family. As to quaternary structure, the RNAP catalytic core consists of 2 alpha, 1 beta, 1 beta' and 1 omega subunit. When a sigma factor is associated with the core the holoenzyme is formed, which can initiate transcription. The cofactor is Mg(2+). It depends on Zn(2+) as a cofactor.

It carries out the reaction RNA(n) + a ribonucleoside 5'-triphosphate = RNA(n+1) + diphosphate. Functionally, DNA-dependent RNA polymerase catalyzes the transcription of DNA into RNA using the four ribonucleoside triphosphates as substrates. This Parvibaculum lavamentivorans (strain DS-1 / DSM 13023 / NCIMB 13966) protein is DNA-directed RNA polymerase subunit beta'.